The following is a 677-amino-acid chain: Pre-mRNA-splicing factor CLF1 (677 aa).

HAT repeat units follow at residues 52–84 (EYQGRKRKEFEDYVRRNRISMNNWMRYAQWELE), 86–118 (KEFRRARSVFERALDVDPTAVVLWIRYIEAEMK), 120–152 (RNINHARNLLDRAVTIYSRVDKLWYKYVYMEEM), 154–185 (GNIPGTRQVFERWMSWEPDEGAWGAYIKLEKR), 187–218 (NEFDRVRAIFERFTVVHPEPKNWIKWARFEEE), 220–255 (GTSDMVREVYGLAIETLGEDFMDEKLFIAYARYEAK), 257–291 (KEFERARAIYKYALDRLPRAKSVALHKAYTTFEKQ), 301–333 (VILSKRRVQYEEQIKENPKNYDIWFDFVRLEES), 335–369 (GDVERVRDVYERAIAQMPPSQEKRHWRRYIYLWIF), 379–415 (KDMERAHQIYQECIRLIPHKKFTFAKIWLMKAQFEIR), 417–448 (MDLQAARKTLGHAIGACPKDKLFKGYIDLERQ), 450–482 (FEFVRCRKLFEKQIEWSPSNCQAWIKFAELERG), 484–518 (DDIDRARAIYELGISQPVLDMPELLWKSYIDFEEY), 520–551 (GEYDRTRALYERLLEKTNHVKVWINFARFEIN), 570–608 (EAKRRARMVFERAHKVFKEKEMKEERVALLNAWKSFEQT), and 613–646 (DDIAKIERQMPSKVKKRRKLDDDRYEEYLDYMFP).

The protein belongs to the crooked-neck family. As to quaternary structure, associated with the spliceosome.

It is found in the nucleus. Its function is as follows. Involved in pre-mRNA splicing and cell cycle progression. Required for the spliceosome assembly and initiation of the DNA replication. The polypeptide is Pre-mRNA-splicing factor CLF1 (CLF1) (Paracoccidioides brasiliensis).